The primary structure comprises 358 residues: Peptide chain release factor 1 (358 aa).

Q235 is modified (N5-methylglutamine).

This sequence belongs to the prokaryotic/mitochondrial release factor family. Post-translationally, methylated by PrmC. Methylation increases the termination efficiency of RF1.

It is found in the cytoplasm. In terms of biological role, peptide chain release factor 1 directs the termination of translation in response to the peptide chain termination codons UAG and UAA. This Neisseria gonorrhoeae (strain NCCP11945) protein is Peptide chain release factor 1.